Reading from the N-terminus, the 534-residue chain is Pentatricopeptide repeat-containing protein At5g08305 (534 aa).

PPR repeat units lie at residues 41-71 (PFVS…LSDP), 72-106 (PNYG…GLLP), 107-141 (DHMT…GLEW), 142-172 (DLFI…MPHK), 173-203 (NLVT…MSER), 204-238 (DVVT…GSSK), 240-274 (NEVT…HLPL), 275-305 (TVIL…ASVK), 308-342 (DALM…KIDP), 343-377 (DEIT…GAEP), and 378-408 (KSEH…MPIK). The tract at residues 413-488 (MLGALLNGCI…IAGHSILDLD (76 aa)) is type E motif. A type E(+) motif region spans residues 489-519 (GTRHRFIAHDKTHFHSDKIYAVLQLTGAWMN).

This sequence belongs to the PPR family. PCMP-E subfamily.

This chain is Pentatricopeptide repeat-containing protein At5g08305 (PCMP-E105), found in Arabidopsis thaliana (Mouse-ear cress).